The sequence spans 366 residues: Chorismate synthase (366 aa).

NADP(+) is bound by residues Arg-48 and Arg-54. FMN contacts are provided by residues 125-127 (RSS), 238-239 (NA), Gly-278, 293-297 (KPTSS), and Arg-319.

It belongs to the chorismate synthase family. In terms of assembly, homotetramer. The cofactor is FMNH2.

The enzyme catalyses 5-O-(1-carboxyvinyl)-3-phosphoshikimate = chorismate + phosphate. It functions in the pathway metabolic intermediate biosynthesis; chorismate biosynthesis; chorismate from D-erythrose 4-phosphate and phosphoenolpyruvate: step 7/7. Catalyzes the anti-1,4-elimination of the C-3 phosphate and the C-6 proR hydrogen from 5-enolpyruvylshikimate-3-phosphate (EPSP) to yield chorismate, which is the branch point compound that serves as the starting substrate for the three terminal pathways of aromatic amino acid biosynthesis. This reaction introduces a second double bond into the aromatic ring system. This is Chorismate synthase from Burkholderia multivorans (strain ATCC 17616 / 249).